A 332-amino-acid chain; its full sequence is Ribosomal RNA small subunit methyltransferase C (332 aa).

This sequence belongs to the methyltransferase superfamily. RsmC family. As to quaternary structure, monomer.

Its subcellular location is the cytoplasm. The enzyme catalyses guanosine(1207) in 16S rRNA + S-adenosyl-L-methionine = N(2)-methylguanosine(1207) in 16S rRNA + S-adenosyl-L-homocysteine + H(+). Its function is as follows. Specifically methylates the guanine in position 1207 of 16S rRNA in the 30S particle. This Pseudomonas aeruginosa (strain UCBPP-PA14) protein is Ribosomal RNA small subunit methyltransferase C.